A 132-amino-acid polypeptide reads, in one-letter code: Cytidine deaminase (132 aa).

A CMP/dCMP-type deaminase domain is found at 1 to 128; that stretch reads MDRQMLIKEA…ELLPGAFTAE (128 aa). 42–44 is a substrate binding site; sequence NIE. Cys53 contributes to the Zn(2+) binding site. Glu55 serves as the catalytic Proton donor. 2 residues coordinate Zn(2+): Cys86 and Cys89.

It belongs to the cytidine and deoxycytidylate deaminase family. Zn(2+) serves as cofactor.

It carries out the reaction cytidine + H2O + H(+) = uridine + NH4(+). The enzyme catalyses 2'-deoxycytidine + H2O + H(+) = 2'-deoxyuridine + NH4(+). Its function is as follows. This enzyme scavenges exogenous and endogenous cytidine and 2'-deoxycytidine for UMP synthesis. The polypeptide is Cytidine deaminase (cdd) (Halalkalibacterium halodurans (strain ATCC BAA-125 / DSM 18197 / FERM 7344 / JCM 9153 / C-125) (Bacillus halodurans)).